Consider the following 203-residue polypeptide: Cbp/p300-interacting transactivator 1 (203 aa).

Disordered stretches follow at residues 1-24 (MPTM…DANQ) and 51-86 (TANG…PSFN). The segment covering 61 to 84 (PTSSSGSTSPIGSPTATPSSKPPS) has biased composition (low complexity). A Nuclear export signal motif is present at residues 168 to 177 (LMSLVVELGL).

Belongs to the CITED family. As to quaternary structure, homodimer. Binds to RBM14. Interacts (via N-terminus) with HSPA8; the interaction suppresses the association of CITED1 with p300/CBP and SMAD-mediated transcription transactivation. Interacts (via C-terminus) with TOX3 (via HGM box); the interaction increases estrogen-response element (ERE)-dependent transcription and protection against cell death. Interacts with ESR1; the interaction occurs in a estrogen-dependent manner. Interacts (unphosphorylated form preferentially and via C-terminus) with EP300. Interacts (via C-terminus) with CREBBP. Interacts with EGR2. Post-translationally, phosphorylated. Phosphorylation changes in a cell cycle-dependent manner and reduces its transcriptional cofactor activity. As to expression, expressed in calvarial osteoblasts. Expressed in nulliparous mammary epithelial cells; absent in pregnant mice and in lacting mammary glands. Also expressed in mammary tumors (at protein level). Expressed only in melanocytes and testis. Expressed at high levels in the strongly pigmented melanoma cells but at low levels in the weakly pigmented cells.

Its subcellular location is the nucleus. The protein localises to the cytoplasm. Its function is as follows. Transcriptional coactivator of the p300/CBP-mediated transcription complex. Enhances SMAD-mediated transcription by strengthening the functional link between the DNA-binding SMAD transcription factors and the p300/CBP transcription coactivator complex. Stimulates estrogen-dependent transactivation activity mediated by estrogen receptors signaling; stabilizes the interaction of estrogen receptor ESR1 and histone acetyltransferase EP300. Positively regulates TGF-beta signaling through its association with the SMAD/p300/CBP-mediated transcriptional coactivator complex. Induces transcription from estrogen-responsive promoters and protection against cell death. Potentiates EGR2-mediated transcriptional activation activity from the ERBB2 promoter. Acts as an inhibitor of osteoblastic mineralization through a cAMP-dependent parathyroid hormone receptor signaling. May play a role in pigmentation of melanocytes. Associates with chromatin to the estrogen-responsive TGF-alpha promoter region in a estrogen-dependent manner. The sequence is that of Cbp/p300-interacting transactivator 1 (Cited1) from Mus musculus (Mouse).